Here is a 109-residue protein sequence, read N- to C-terminus: SRA stem-loop-interacting RNA-binding protein, mitochondrial (109 aa).

Ser15 is subject to Phosphoserine. In terms of domain architecture, RRM spans 19 to 103 (PVAFVRRIPW…RRPKLPQTSD (85 aa)). Phosphothreonine is present on Thr101. Ser102 is modified (phosphoserine).

Ubiquitously expressed, with highest level in heart, liver, skeletal muscle and testis.

It localises to the mitochondrion. It is found in the nucleus. In terms of biological role, RNA-binding protein that acts as a nuclear receptor corepressor. Probably acts by binding the SRA RNA, and repressing the SRA-mediated nuclear receptor coactivation. Binds the STR7 loop of SRA RNA. Also able to repress glucocorticoid (GR), androgen (AR), thyroid (TR) and VDR-mediated transactivation. The polypeptide is SRA stem-loop-interacting RNA-binding protein, mitochondrial (SLIRP) (Homo sapiens (Human)).